Consider the following 380-residue polypeptide: Cytochrome b (380 aa).

4 helical membrane passes run 33 to 53 (FGSL…FLAM), 77 to 98 (WLIR…FIHV), 113 to 133 (WNIG…GYVL), and 178 to 198 (FFAF…VHLL). His83 and His97 together coordinate heme b. Heme b-binding residues include His182 and His196. An a ubiquinone-binding site is contributed by His201. Helical transmembrane passes span 226 to 246 (IKDL…VLFF), 288 to 308 (LGGV…PLLN), 320 to 340 (ITQV…XXXX), and 347 to 367 (XXXX…IFMP).

This sequence belongs to the cytochrome b family. The cytochrome bc1 complex contains 11 subunits: 3 respiratory subunits (MT-CYB, CYC1 and UQCRFS1), 2 core proteins (UQCRC1 and UQCRC2) and 6 low-molecular weight proteins (UQCRH/QCR6, UQCRB/QCR7, UQCRQ/QCR8, UQCR10/QCR9, UQCR11/QCR10 and a cleavage product of UQCRFS1). This cytochrome bc1 complex then forms a dimer. It depends on heme b as a cofactor.

It localises to the mitochondrion inner membrane. In terms of biological role, component of the ubiquinol-cytochrome c reductase complex (complex III or cytochrome b-c1 complex) that is part of the mitochondrial respiratory chain. The b-c1 complex mediates electron transfer from ubiquinol to cytochrome c. Contributes to the generation of a proton gradient across the mitochondrial membrane that is then used for ATP synthesis. This chain is Cytochrome b (MT-CYB), found in Rhipidomys leucodactylus (White-footed climbing mouse).